Consider the following 633-residue polypeptide: Pesticidal crystal protein Cry2Ad (633 aa).

This sequence belongs to the delta endotoxin family.

In terms of biological role, promotes colloidosmotic lysis by binding to the midgut epithelial cells of insects. In Bacillus thuringiensis, this protein is Pesticidal crystal protein Cry2Ad (cry2Ad).